A 46-amino-acid chain; its full sequence is Protein krueppel (46 aa).

C2H2-type zinc fingers lie at residues 1–4 (MRLH), 10–32 (YHCTHCERQFVQVANLRRHLRVH), and 38–46 (YACELCTSK).

Belongs to the krueppel C2H2-type zinc-finger protein family.

Its subcellular location is the nucleus. In terms of biological role, krueppel is a gap class segmentation protein. This chain is Protein krueppel (Kr), found in Lithobius forficatus (Centipede).